We begin with the raw amino-acid sequence, 196 residues long: Imidazole glycerol phosphate synthase subunit HisH (196 aa).

In terms of domain architecture, Glutamine amidotransferase type-1 spans 2 to 196 (KVAVVKYNAG…ERVLRNFLDL (195 aa)). The active-site Nucleophile is Cys-77. Residues His-178 and Glu-180 contribute to the active site.

As to quaternary structure, heterodimer of HisH and HisF.

The protein localises to the cytoplasm. The enzyme catalyses 5-[(5-phospho-1-deoxy-D-ribulos-1-ylimino)methylamino]-1-(5-phospho-beta-D-ribosyl)imidazole-4-carboxamide + L-glutamine = D-erythro-1-(imidazol-4-yl)glycerol 3-phosphate + 5-amino-1-(5-phospho-beta-D-ribosyl)imidazole-4-carboxamide + L-glutamate + H(+). It catalyses the reaction L-glutamine + H2O = L-glutamate + NH4(+). It participates in amino-acid biosynthesis; L-histidine biosynthesis; L-histidine from 5-phospho-alpha-D-ribose 1-diphosphate: step 5/9. Its function is as follows. IGPS catalyzes the conversion of PRFAR and glutamine to IGP, AICAR and glutamate. The HisH subunit catalyzes the hydrolysis of glutamine to glutamate and ammonia as part of the synthesis of IGP and AICAR. The resulting ammonia molecule is channeled to the active site of HisF. The polypeptide is Imidazole glycerol phosphate synthase subunit HisH (Bacteroides thetaiotaomicron (strain ATCC 29148 / DSM 2079 / JCM 5827 / CCUG 10774 / NCTC 10582 / VPI-5482 / E50)).